A 591-amino-acid chain; its full sequence is Ketol-acid reductoisomerase, chloroplastic (591 aa).

The segment at 1-20 (MAAATSSIAPSLSCPSPSSS) is disordered. The transit peptide at 1-52 (MAAATSSIAPSLSCPSPSSSSKTLWSSKARTLALPNIGFLSSSSKSLRSLTA) directs the protein to the chloroplast. Threonine 53 is subject to N-acetylthreonine. The KARI N-terminal Rossmann domain maps to 102-300 (VRGGRDLFKH…ALGSPFTFAT (199 aa)). NADP(+)-binding positions include 123–130 (GVIGWGSQ), 156–161 (RKGSRS), and 195–199 (SDAAQ). Residue histidine 220 is part of the active site. KARI C-terminal knotted domains are found at residues 301–449 (TLEQ…RPAG) and 450–586 (DLGP…RPEL). Aspartate 309, glutamate 313, glutamate 486, and glutamate 490 together coordinate Mg(2+). Substrate is bound at residue serine 512.

It belongs to the ketol-acid reductoisomerase family. In terms of assembly, homodimer. Mg(2+) is required as a cofactor.

The protein resides in the plastid. The protein localises to the chloroplast. It catalyses the reaction (2R)-2,3-dihydroxy-3-methylbutanoate + NADP(+) = (2S)-2-acetolactate + NADPH + H(+). The catalysed reaction is (2R,3R)-2,3-dihydroxy-3-methylpentanoate + NADP(+) = (S)-2-ethyl-2-hydroxy-3-oxobutanoate + NADPH + H(+). Its pathway is amino-acid biosynthesis; L-isoleucine biosynthesis; L-isoleucine from 2-oxobutanoate: step 2/4. It functions in the pathway amino-acid biosynthesis; L-valine biosynthesis; L-valine from pyruvate: step 2/4. This Arabidopsis thaliana (Mouse-ear cress) protein is Ketol-acid reductoisomerase, chloroplastic.